A 148-amino-acid chain; its full sequence is MRGKRMNHITVSGLVATEPRSFLTAEGVHITSFRLAAQDRHFSRNANSWVSGDTNWFTVTGFRALGSNAAESISKGDRVIVYGRLRLRTWGDNKMAVEIEAESFGHDLRWGTSVFSKRFYQLPEASDNLRTKYDVDEAETPEIHAKAA.

An SSB domain is found at 6 to 108 (MNHITVSGLV…IEAESFGHDL (103 aa)).

Homotetramer.

The protein is Single-stranded DNA-binding protein 2 (ssb2) of Tropheryma whipplei (strain TW08/27) (Whipple's bacillus).